Consider the following 151-residue polypeptide: Deoxyuridine 5'-triphosphate nucleotidohydrolase (151 aa).

Substrate-binding positions include 70 to 72, Asn-83, 87 to 89, and Met-97; these read RSG and LID.

It belongs to the dUTPase family. As to quaternary structure, homotrimer. The cofactor is Mg(2+).

It carries out the reaction dUTP + H2O = dUMP + diphosphate + H(+). It functions in the pathway pyrimidine metabolism; dUMP biosynthesis; dUMP from dCTP (dUTP route): step 2/2. Functionally, this enzyme is involved in nucleotide metabolism: it produces dUMP, the immediate precursor of thymidine nucleotides and it decreases the intracellular concentration of dUTP so that uracil cannot be incorporated into DNA. The polypeptide is Deoxyuridine 5'-triphosphate nucleotidohydrolase (Escherichia coli (strain K12 / MC4100 / BW2952)).